Consider the following 368-residue polypeptide: 4-hydroxy-3-methylbut-2-en-1-yl diphosphate synthase (flavodoxin) (368 aa).

Residues Cys268, Cys271, Cys303, and Glu310 each contribute to the [4Fe-4S] cluster site.

It belongs to the IspG family. It depends on [4Fe-4S] cluster as a cofactor.

The enzyme catalyses (2E)-4-hydroxy-3-methylbut-2-enyl diphosphate + oxidized [flavodoxin] + H2O + 2 H(+) = 2-C-methyl-D-erythritol 2,4-cyclic diphosphate + reduced [flavodoxin]. The protein operates within isoprenoid biosynthesis; isopentenyl diphosphate biosynthesis via DXP pathway; isopentenyl diphosphate from 1-deoxy-D-xylulose 5-phosphate: step 5/6. Converts 2C-methyl-D-erythritol 2,4-cyclodiphosphate (ME-2,4cPP) into 1-hydroxy-2-methyl-2-(E)-butenyl 4-diphosphate. In Listeria monocytogenes serovar 1/2a (strain ATCC BAA-679 / EGD-e), this protein is 4-hydroxy-3-methylbut-2-en-1-yl diphosphate synthase (flavodoxin).